The sequence spans 385 residues: Methionine aminopeptidase 1 (385 aa).

A C6H2-type zinc finger spans residues Ser6–Lys59. 8 residues coordinate Zn(2+): Cys9, Cys14, Cys22, Cys25, Cys36, Cys40, His48, and His52. An a protein-binding site is contributed by His203. Zn(2+) contacts are provided by Asp220, Asp231, and His294. Residue His301 coordinates a protein. Zn(2+) contacts are provided by Glu327 and Glu358.

Belongs to the peptidase M24A family. Methionine aminopeptidase type 1 subfamily. Associates with the 60S ribosomal subunit of the 80S translational complex. Zn(2+) is required as a cofactor. The cofactor is Co(2+). Requires Mn(2+) as cofactor. It depends on Fe(2+) as a cofactor.

It localises to the cytoplasm. It carries out the reaction Release of N-terminal amino acids, preferentially methionine, from peptides and arylamides.. Functionally, cotranslationally removes the N-terminal methionine from nascent proteins. The N-terminal methionine is often cleaved when the second residue in the primary sequence is small and uncharged (Met-Ala-, Cys, Gly, Pro, Ser, Thr, or Val). In Xenopus laevis (African clawed frog), this protein is Methionine aminopeptidase 1 (metap1).